The sequence spans 113 residues: UPF0482 protein YnfB (113 aa).

A signal peptide spans 1–28 (MNILSGKLPFLLGAVFAGSVVLATSVQA).

The protein belongs to the UPF0482 family.

The sequence is that of UPF0482 protein YnfB from Escherichia fergusonii (strain ATCC 35469 / DSM 13698 / CCUG 18766 / IAM 14443 / JCM 21226 / LMG 7866 / NBRC 102419 / NCTC 12128 / CDC 0568-73).